The sequence spans 719 residues: MSSLPHNHHYETHHRGTAEVPFDELIGVTPDGVPVISNGNEAHFSNLESITAACLPLSSFERKAPCKQPYRKMGVKWQCVEFVRRYLASRKAVWMTSLCTAEEVWREENLFVDVRDGRPVEVVRTPNKSTGPAPAVADIVVWGEGPETPFGHVAIVTEVCASCVRVAEQNQGFEKWPEDVPFSREIAMRTTESGEVELLDEDPLLGWVTVQAPFYNFDDGDLADSFRLVVGQGQILRQPFPKHVDVPWLNTGEECDTILKHSLVVDGNMGEGAHAEEGDVPGAFYFLDYDMFCRLGRAASSLHRIAMAATAKVLEDPESTHLLEHYFGVPPEIQPLLRRSWEMTPPMGGRFDFGYDGKNVVMLEYNCDSSGALLECCNTQEKMARFYGVSQGTSTGSFLGAKCVTYFQRLLTNEKVCPQHRLIHFMIDEDDEERYTARCMMGFAEQAGFRTKLCVKLVNFRYRDGPPSNAAPLATPCDHPTIVDGEDEEVLMVWKTWSWDTVLHQYHSQRSSSDAVNTPTLSDILLNNNIRVLEPLWKAVTGSKAILPFMHALAPDHEHMLAASFLPTREIISRHYISKPVNGRAGQNIMMYDPVTSPTELEGAPQQDICEALSQNASARSLLNGSPLPLSQSVDQTNECSPGKFFDSVLVYQQRLFLKKFDGKYFPIFCGWMVGDEFGGVVVREDTSKITKLSSMVVPARVVRDNVPLGVSYSDEGET.

The 147-residue stretch at 54 to 200 (CLPLSSFERK…TESGEVELLD (147 aa)) folds into the Peptidase C51 domain. Arginine 350 provides a ligand contact to glutathione. An ATP-binding site is contributed by 350-352 (RFD). Residues aspartate 352, glutamate 364, and asparagine 366 each contribute to the Mg(2+) site. Serine 369 lines the glutathione pocket. Glutamate 432 provides a ligand contact to spermidine. Residues glutamate 433 and threonine 501 each contribute to the glutathione site. ATP-binding positions include lysine 544, lysine 579, glycine 586, glutamine 653, and 689–691 (KIT).

This sequence in the C-terminal section; belongs to the glutathionylspermidine synthase preATP-grasp family. It depends on Mg(2+) as a cofactor. The N-terminus is blocked.

It carries out the reaction spermidine + glutathione + ATP = glutathionylspermidine + ADP + phosphate + H(+). Conjugates glutathione (gamma-Glu-Cys-Gly) and spermidine to form glutathionylspermidine in the biosynthesis trypanothione (N(1),N(8)-bis(glutathionyl)spermidine), which is involved in maintaining intracellular thiol redox and in defense against oxidants. This chain is Glutathionylspermidine synthase (GSP), found in Crithidia fasciculata.